A 430-amino-acid polypeptide reads, in one-letter code: MMLDKDSVKAIDVQTASLQSYISSPEKQKSLYKRTLFVVSISQIFGGAGLAAGVTVGALIAQQMLGTDAFAGLPSALFTLGSAGSALIVGRLSQRYGRRTGLSAGFMIGGLGAIGVIMAAIINSIFLLFISLLIYGAGTATNLQARYAGTDLANHKQRATAVSITMVFTTFGAVAGPSLVNVMGDFALSIGVPSLAGPFILAAAAYMLAGVVLFIMLRPDPLVIARTIEAANEEPGDKGHLAATEHTENKKGIIVGATVMVLTQIVMVAIMTMTPVHMRHHGHDLGAVGLVIGFHIGAMYLPSLVTGVLVDRLGRTAMAISSGTTLLLAGVIAAFAPGESMILLVIALSLLGLGWNFGLISGTALIVDSTDTATRAKTQGTVDVLIALSGAAGGALSGMIVAGSSYLALSLIGGILSLLLIPVVVWSRGR.

The next 12 helical transmembrane spans lie at 36 to 56, 69 to 89, 100 to 122, 126 to 148, 160 to 180, 197 to 217, 253 to 273, 285 to 305, 317 to 337, 340 to 360, 384 to 404, and 406 to 426; these read LFVVSISQIFGGAGLAAGVTV, AFAGLPSALFTLGSAGSALIV, TGLSAGFMIGGLGAIGVIMAAII, FLLFISLLIYGAGTATNLQARYA, TAVSITMVFTTFGAVAGPSLV, GPFILAAAAYMLAGVVLFIML, IIVGATVMVLTQIVMVAIMTM, LGAVGLVIGFHIGAMYLPSLV, AMAISSGTTLLLAGVIAAFAP, SMILLVIALSLLGLGWNFGLI, VLIALSGAAGGALSGMIVAGS, and YLALSLIGGILSLLLIPVVVW.

The protein belongs to the major facilitator superfamily.

The protein localises to the cell membrane. This is an uncharacterized protein from Bacillus subtilis (strain 168).